A 160-amino-acid polypeptide reads, in one-letter code: Putative pre-16S rRNA nuclease (160 aa).

This sequence belongs to the YqgF nuclease family.

Its subcellular location is the cytoplasm. Functionally, could be a nuclease involved in processing of the 5'-end of pre-16S rRNA. This is Putative pre-16S rRNA nuclease from Cereibacter sphaeroides (strain KD131 / KCTC 12085) (Rhodobacter sphaeroides).